The sequence spans 351 residues: Uroporphyrinogen decarboxylase (351 aa).

Substrate-binding positions include 25–29, Asp74, Tyr151, Ser206, and His325; that span reads RQAGR.

Belongs to the uroporphyrinogen decarboxylase family. As to quaternary structure, homodimer.

Its subcellular location is the cytoplasm. It carries out the reaction uroporphyrinogen III + 4 H(+) = coproporphyrinogen III + 4 CO2. Its pathway is porphyrin-containing compound metabolism; protoporphyrin-IX biosynthesis; coproporphyrinogen-III from 5-aminolevulinate: step 4/4. Catalyzes the decarboxylation of four acetate groups of uroporphyrinogen-III to yield coproporphyrinogen-III. The protein is Uroporphyrinogen decarboxylase of Pelodictyon phaeoclathratiforme (strain DSM 5477 / BU-1).